Consider the following 91-residue polypeptide: Co-chaperonin GroES (91 aa).

This sequence belongs to the GroES chaperonin family. As to quaternary structure, heptamer of 7 subunits arranged in a ring. Interacts with the chaperonin GroEL.

It is found in the cytoplasm. Its function is as follows. Together with the chaperonin GroEL, plays an essential role in assisting protein folding. The GroEL-GroES system forms a nano-cage that allows encapsulation of the non-native substrate proteins and provides a physical environment optimized to promote and accelerate protein folding. GroES binds to the apical surface of the GroEL ring, thereby capping the opening of the GroEL channel. The polypeptide is Co-chaperonin GroES (Oenococcus oeni (strain ATCC BAA-331 / PSU-1)).